A 312-amino-acid chain; its full sequence is Porphobilinogen deaminase (312 aa).

An S-(dipyrrolylmethanemethyl)cysteine modification is found at C235.

Belongs to the HMBS family. Monomer. It depends on dipyrromethane as a cofactor.

The catalysed reaction is 4 porphobilinogen + H2O = hydroxymethylbilane + 4 NH4(+). It functions in the pathway porphyrin-containing compound metabolism; protoporphyrin-IX biosynthesis; coproporphyrinogen-III from 5-aminolevulinate: step 2/4. Tetrapolymerization of the monopyrrole PBG into the hydroxymethylbilane pre-uroporphyrinogen in several discrete steps. In Mycolicibacterium gilvum (strain PYR-GCK) (Mycobacterium gilvum (strain PYR-GCK)), this protein is Porphobilinogen deaminase.